Here is a 616-residue protein sequence, read N- to C-terminus: Dihydroxy-acid dehydratase (616 aa).

Aspartate 81 serves as a coordination point for Mg(2+). Cysteine 122 contributes to the [2Fe-2S] cluster binding site. 2 residues coordinate Mg(2+): aspartate 123 and lysine 124. Position 124 is an N6-carboxylysine (lysine 124). Position 195 (cysteine 195) interacts with [2Fe-2S] cluster. Glutamate 491 contributes to the Mg(2+) binding site. Serine 517 acts as the Proton acceptor in catalysis.

It belongs to the IlvD/Edd family. Homodimer. The cofactor is [2Fe-2S] cluster. Mg(2+) is required as a cofactor.

It carries out the reaction (2R)-2,3-dihydroxy-3-methylbutanoate = 3-methyl-2-oxobutanoate + H2O. It catalyses the reaction (2R,3R)-2,3-dihydroxy-3-methylpentanoate = (S)-3-methyl-2-oxopentanoate + H2O. It participates in amino-acid biosynthesis; L-isoleucine biosynthesis; L-isoleucine from 2-oxobutanoate: step 3/4. The protein operates within amino-acid biosynthesis; L-valine biosynthesis; L-valine from pyruvate: step 3/4. Its function is as follows. Functions in the biosynthesis of branched-chain amino acids. Catalyzes the dehydration of (2R,3R)-2,3-dihydroxy-3-methylpentanoate (2,3-dihydroxy-3-methylvalerate) into 2-oxo-3-methylpentanoate (2-oxo-3-methylvalerate) and of (2R)-2,3-dihydroxy-3-methylbutanoate (2,3-dihydroxyisovalerate) into 2-oxo-3-methylbutanoate (2-oxoisovalerate), the penultimate precursor to L-isoleucine and L-valine, respectively. In Edwardsiella ictaluri (strain 93-146), this protein is Dihydroxy-acid dehydratase.